Consider the following 443-residue polypeptide: KH domain-containing, RNA-binding, signal transduction-associated protein 1 (443 aa).

The tract at residues 1–96 (MQRRDDPAAR…LPPSATASVK (96 aa)) is disordered. Low complexity predominate over residues 10-21 (RMSRSSGRSGSM). A phosphoserine mark is found at S18, S20, and S29. T33 bears the Phosphothreonine mark. R45 carries the post-translational modification Asymmetric dimethylarginine; by PRMT1. Position 52 is an asymmetric dimethylarginine; partial; by PRMT1 (R52). A Phosphoserine modification is found at S58. At T84 the chain carries Phosphothreonine; by MAPK1. Glycyl lysine isopeptide (Lys-Gly) (interchain with G-Cter in SUMO2) cross-links involve residues K96 and K102. The tract at residues 100 to 260 (ENKYLPELMA…VKKFLVPDMM (161 aa)) is involved in homodimerization. Position 113 is a phosphoserine (S113). K139 is covalently cross-linked (Glycyl lysine isopeptide (Lys-Gly) (interchain with G-Cter in SUMO2)). S150 carries the post-translational modification Phosphoserine. Residues 171–197 (NFVGKILGPQGNTIKRLQEETGAKISV) form the KH domain. An N6-acetyllysine; alternate modification is found at K175. Residue K175 forms a Glycyl lysine isopeptide (Lys-Gly) (interchain with G-Cter in SUMO2); alternate linkage. T183 is subject to Phosphothreonine. Residues 280-293 (PSRGRGVPVRGRGA) show a composition bias toward low complexity. The segment at 280–316 (PSRGRGVPVRGRGAAPPPPPVPRGRGVGPPRGALVRG) is disordered. 3 positions are modified to omega-N-methylarginine: R282, R284, and R291. At R304 the chain carries Asymmetric dimethylarginine; by PRMT1. Residues 307 to 316 (GPPRGALVRG) show a composition bias toward low complexity. Omega-N-methylarginine; by PRMT1 occurs at positions 310, 315, 320, and 325. R320 bears the Dimethylated arginine; in A2780 ovarian carcinoma cell line mark. The disordered stretch occupies residues 327–346 (ATVTRGVPPPPTVRGAPAPR). Residues R331 and R340 each carry the dimethylated arginine; in A2780 ovarian carcinoma cell line modification. The residue at position 331 (R331) is an Asymmetric dimethylarginine; alternate. R331 carries the omega-N-methylarginine; by PRMT1; alternate modification. R340 carries the omega-N-methylarginine; by PRMT1 modification. The tract at residues 351 to 443 (GIQRIPLPPP…AYREHPYGRY (93 aa)) is interaction with HNRNPA1. Phosphotyrosine is present on Y387. Phosphoserine is present on S390. The segment at 400–420 (GHGEVQDSYEAYGQDDWNGTR) is interaction with ZBTB7A. The disordered stretch occupies residues 411–443 (YGQDDWNGTRPSLKAPPARPVKGAYREHPYGRY). K432 participates in a covalent cross-link: Glycyl lysine isopeptide (Lys-Gly) (interchain with G-Cter in SUMO2). The segment covering 434–443 (AYREHPYGRY) has biased composition (basic and acidic residues). Y435, Y440, and Y443 each carry phosphotyrosine; by PTK6.

Belongs to the KHDRBS family. Self-associates to form homooligomers when bound to RNA, oligomerization appears to be limited when binding to proteins; dimerization increases RNA affinity. Forms a trimeric complex in the nucleus consisting of BANP, HDAC6 and KHDRBS1/SAM68; HDAC6 keeps KHDRBS1 in a deacetylated state which inhibits the inclusion of CD44 alternate exons. The complex is disrupted by MAPK1/MAPK3-mediated phosphorylation of BANP which results in BANP export to the cytoplasm. This facilitates acetylation of KHDRBS1 and CD44 variant exon inclusion. Interacts with KHDRBS3/SLIM-2. Interacts with KHDRBS2/SLIM-1; heterooligomer formation of KHDRBS family proteins may modulate RNA substrate specificity. Interacts with RASA1, LCK, FYN, PTPN6, PLCG1, GRB2, CBL, JAK3, PIK3R, STAT3, APC, HNRNPA1. Interacts with PTK6 (via SH3 and SH2 domains). Forms a complex with ILF2, ILF3, YLPM1, RBMX, NCOA5 and PPP1CA. Does not interact with TPR. Interacts with PRMT1. Binds WBP4/FBP21 (via WW domains), FNBP4/FBP30 (via WW domains). Interacts (via Arg/Gly-rich-flanked Pro-rich regions) with FYN (via the SH3 domain). Interacts with the non-receptor tyrosine kinase SRMS; the interaction leads to phosphorylation of KHDRBS1. Interacts with ZBTB7A; negatively regulates KHDRBS1 splicing activity toward BCL2L1. Tyrosine phosphorylated by several non-receptor tyrosine kinases including LCK, FYN and JAK3. Also tyrosine phosphorylated by the non-receptor tyrosine kinase SRMS in an EGF-dependent manner. Negatively correlates with ability to bind RNA but required for many interactions with proteins. Phosphorylation by PTK6 negatively regulates its RNA binding ability. Phosphorylation by PTK6 at Tyr-440 dictates the nuclear localization of KHDRBS1. Phosphorylation at Tyr-387 disrupts interaction with APC. Phosphorylation at tyrosine residues by FYN inverts activity on modulation of BCL2L1 alternative splicing. Post-translationally, acetylated. Positively correlates with ability to bind RNA. Deacetylated by HDAC6; this regulates alternative splicing by inhibiting the inclusion of CD44 alternate exons. In terms of processing, arginine methylation is required for nuclear localization. Also can affect interaction with other proteins. Inhibits interaction with Src-like SH3 domains, but not interaction with WW domains of WBP4/FBP21 and FNBP4/FBP30. In terms of tissue distribution, ubiquitously expressed in all tissue examined. Isoform 1 is expressed at lower levels in brain, skeletal muscle, and liver whereas isoform 3 is intensified in skeletal muscle and in liver.

It is found in the nucleus. Its subcellular location is the cytoplasm. The protein localises to the membrane. In terms of biological role, recruited and tyrosine phosphorylated by several receptor systems, for example the T-cell, leptin and insulin receptors. Once phosphorylated, functions as an adapter protein in signal transduction cascades by binding to SH2 and SH3 domain-containing proteins. Role in G2-M progression in the cell cycle. Represses CBP-dependent transcriptional activation apparently by competing with other nuclear factors for binding to CBP. Also acts as a putative regulator of mRNA stability and/or translation rates and mediates mRNA nuclear export. Positively regulates the association of constitutive transport element (CTE)-containing mRNA with large polyribosomes and translation initiation. According to some authors, is not involved in the nucleocytoplasmic export of unspliced (CTE)-containing RNA species according to. RNA-binding protein that plays a role in the regulation of alternative splicing and influences mRNA splice site selection and exon inclusion. Binds to RNA containing 5'-[AU]UAA-3' as a bipartite motif spaced by more than 15 nucleotides. Binds poly(A). Can regulate CD44 alternative splicing in a Ras pathway-dependent manner. In cooperation with HNRNPA1 modulates alternative splicing of BCL2L1 by promoting splicing toward isoform Bcl-X(S), and of SMN1. Can regulate alternative splicing of NRXN1 and NRXN3 in the laminin G-like domain 6 containing the evolutionary conserved neurexin alternative spliced segment 4 (AS4) involved in neurexin selective targeting to postsynaptic partners. In a neuronal activity-dependent manner cooperates synergistically with KHDRBS2/SLIM-1 in regulation of NRXN1 exon skipping at AS4. The cooperation with KHDRBS2/SLIM-1 is antagonistic for regulation of NXRN3 alternative splicing at AS4. Isoform 3, which is expressed in growth-arrested cells only, inhibits S phase. In Homo sapiens (Human), this protein is KH domain-containing, RNA-binding, signal transduction-associated protein 1.